The chain runs to 469 residues: 3-isopropylmalate dehydratase large subunit (469 aa).

Residues Cys-347, Cys-407, and Cys-410 each contribute to the [4Fe-4S] cluster site.

This sequence belongs to the aconitase/IPM isomerase family. LeuC type 1 subfamily. In terms of assembly, heterodimer of LeuC and LeuD. The cofactor is [4Fe-4S] cluster.

The enzyme catalyses (2R,3S)-3-isopropylmalate = (2S)-2-isopropylmalate. Its pathway is amino-acid biosynthesis; L-leucine biosynthesis; L-leucine from 3-methyl-2-oxobutanoate: step 2/4. In terms of biological role, catalyzes the isomerization between 2-isopropylmalate and 3-isopropylmalate, via the formation of 2-isopropylmaleate. This is 3-isopropylmalate dehydratase large subunit from Photorhabdus laumondii subsp. laumondii (strain DSM 15139 / CIP 105565 / TT01) (Photorhabdus luminescens subsp. laumondii).